We begin with the raw amino-acid sequence, 676 residues long: XK-related protein 5 (676 aa).

Transmembrane regions (helical) follow at residues 37–57, 114–134, 140–160, 206–226, 239–259, 266–286, and 294–314; these read WLAL…FLWF, LLEA…VFLA, IVPG…LVSY, VWVL…LVAQ, LFNL…WDSP, SFYL…TDFL, and LWTV…LVIY. 4 disordered regions span residues 336–362, 372–391, 495–538, and 598–661; these read PIED…DSSS, TSLD…GLGE, LEDN…KEGQ, and PIPG…IQRD. Positions 498–509 are enriched in polar residues; that stretch reads NATTQKPPATQE.

Belongs to the XK family.

The protein resides in the cell membrane. In Mus musculus (Mouse), this protein is XK-related protein 5.